The primary structure comprises 165 residues: UPF0254 protein MmarC7_0182 (165 aa).

The protein belongs to the UPF0254 family.

This is UPF0254 protein MmarC7_0182 from Methanococcus maripaludis (strain C7 / ATCC BAA-1331).